The chain runs to 930 residues: Semaphorin-6C (930 aa).

The first 24 residues, 1–24, serve as a signal peptide directing secretion; that stretch reads MPRAPHFMPLLLLLLLLSLPHTQA. The Extracellular portion of the chain corresponds to 25-604; that stretch reads AFPQDPLPLL…ASASRSVPIP (580 aa). Positions 30–516 constitute a Sema domain; sequence PLPLLISDLQ…FSGCIVYLPL (487 aa). Residue Asn70 is glycosylated (N-linked (GlcNAc...) asparagine). 4 cysteine pairs are disulfide-bonded: Cys111–Cys121, Cys139–Cys148, Cys262–Cys373, and Cys287–Cys332. N-linked (GlcNAc...) asparagine glycosylation occurs at Asn286. N-linked (GlcNAc...) asparagine glycosylation is present at Asn437. Cystine bridges form between Cys479–Cys510, Cys519–Cys537, Cys525–Cys570, and Cys529–Cys545. Positions 554–593 are disordered; that stretch reads TDVDQAGNQESMEHGDCQDGATGSQSGPGDSAYGVRRDLP. A helical membrane pass occupies residues 605 to 625; sequence LLLASVAAAFALGASVSGLLV. Residues 626 to 930 are Cytoplasmic-facing; sequence SCACRRAHRR…AVPNGGRFNF (305 aa). Disordered stretches follow at residues 654-674, 716-761, 775-882, and 908-930; these read LARLHGGGPEPPPPSKDGDAV, GDPW…PGQA, HGPQ…PGKH, and SLKPPLVGPSSRQAVPNGGRFNF. The span at 829–844 shows a compositional bias: low complexity; sequence ASAPARPALSAPAPRL.

The protein belongs to the semaphorin family. As to expression, in adult tissues, expressed only in skeletal muscle.

The protein localises to the cell membrane. Functionally, shows growth cone collapsing activity on dorsal root ganglion (DRG) neurons in vitro. May be a stop signal for the DRG neurons in their target areas, and possibly also for other neurons. May also be involved in the maintenance and remodeling of neuronal connections. The chain is Semaphorin-6C (SEMA6C) from Homo sapiens (Human).